We begin with the raw amino-acid sequence, 617 residues long: Protein fem-1 homolog C (617 aa).

Met-1 is modified (N-acetylmethionine). ANK repeat units lie at residues 2 to 31, 40 to 70, 82 to 111, 115 to 144, 148 to 177, 181 to 210, and 213 to 242; these read DLKT…KEEV, NGAT…SIEV, EGAP…SVNN, TNST…DLEV, HGHT…DVNR, KGNT…KMEK, and YGMT…TSKT. TPR repeat units follow at residues 245–279 and 338–371; these read INAL…RYSD and SYYI…QQSN. ANK repeat units lie at residues 481–523 and 527–556; these read NNFS…DVNV and DDNS…HFDA.

The protein belongs to the fem-1 family. As to quaternary structure, component of a Cul2-RING (CRL2) E3 ubiquitin-protein ligase complex, also named ECS (Elongin BC-CUL2/5-SOCS-box protein) complex, composed of CUL2, Elongin BC (ELOB and ELOC), RBX1 and substrate-specific adapter FEM1C. In terms of tissue distribution, widely expressed. Highly expressed in kidney, cardiac tissue, skeletal muscle and testis. Expressed at lower levels in other tissues, including cartilage.

Its pathway is protein modification; protein ubiquitination. Functionally, substrate-recognition component of a Cul2-RING (CRL2) E3 ubiquitin-protein ligase complex of the DesCEND (destruction via C-end degrons) pathway, which recognizes a C-degron located at the extreme C terminus of target proteins, leading to their ubiquitination and degradation. The C-degron recognized by the DesCEND pathway is usually a motif of less than ten residues and can be present in full-length proteins, truncated proteins or proteolytically cleaved forms. The CRL2(FEM1C) complex specifically recognizes proteins with an arginine at the C-terminus: recognizes and binds proteins ending with -Lys/Arg-Xaa-Arg and -Lys/Arg-Xaa-Xaa-Arg C-degrons, such as SIL1 or OR51B2, leading to their ubiquitination and degradation. The CRL2(FEM1C) complex mediates ubiquitination and degradation of truncated MSRB1/SEPX1 selenoproteins produced by failed UGA/Sec decoding. Promotes ubiquitination and degradation of SLBP. This Homo sapiens (Human) protein is Protein fem-1 homolog C.